The sequence spans 154 residues: Endoribonuclease YbeY (154 aa).

Residues His-114, His-118, and His-124 each coordinate Zn(2+).

It belongs to the endoribonuclease YbeY family. It depends on Zn(2+) as a cofactor.

Its subcellular location is the cytoplasm. Single strand-specific metallo-endoribonuclease involved in late-stage 70S ribosome quality control and in maturation of the 3' terminus of the 16S rRNA. The sequence is that of Endoribonuclease YbeY from Haemophilus influenzae (strain 86-028NP).